The primary structure comprises 910 residues: Auxilin (910 aa).

A run of 3 repeats spans residues 33 to 36 (NLKD), 37 to 40 (NLKD), and 41 to 44 (TLKD). Residues 33–44 (NLKDNLKDTLKD) form a 3 X 4 AA approximate tandem repeats region. Residues 52–219 (SVTSYTKGDL…GYMCDLLADK (168 aa)) enclose the Phosphatase tensin-type domain. Position 109 is a phosphoserine (serine 109). Cysteine 161 acts as the Phosphocysteine intermediate in catalysis. The C2 tensin-type domain occupies 225–363 (FKPLTIKSIT…FQVTLDVELQ (139 aa)). The SH3-binding signature appears at 406 to 414 (PIDIPPDNP). Positions 448 to 772 (QESEQSDDEL…RGKAAANLEG (325 aa)) are disordered. A phosphoserine mark is found at serine 450, serine 453, serine 560, and serine 567. The span at 547–569 (PSGPTSTQSTPRRSATSTSASPT) shows a compositional bias: low complexity. Over residues 596-626 (FLNTASASSDPFLQPTRSPSPTVHASSTPAV) the composition is skewed to polar residues. Low complexity predominate over residues 651–666 (SAATSPTGSSHGTPTH). Residues 715–725 (MGGGWQQGGGY) are compositionally biased toward gly residues. The segment covering 732-758 (SKPQSSMPHSSPQNRPNYNVSFSSMPG) has biased composition (polar residues). Residues 846–910 (TKWKPVGMAD…FENQGQKPLY (65 aa)) enclose the J domain.

Forms a complex composed of HSPA8, CLTC and DNAJC6. Interacts with HSPA8/HSC70 in an ATP-dependent manner; this interaction stimulates the HSPA8's ATPase activity. Interacts with CLTC; this interaction produces a local change in heavy-chain contacts, creating a detectable global distortion of the clathrin coat. Interacts with AP2A2. Interacts with DNM1(GTP-bound form); this interaction allows clathrin-coated vesicle (CCV) formation at the plasma membrane. The N-terminus is blocked. In terms of processing, phosphorylation at Ser-567 modulates its ability to bind CLTC and therefore the synaptic vesicle endocytosis (SVE). As to expression, brain.

The protein resides in the cytoplasmic vesicle. It is found in the clathrin-coated vesicle. May act as a protein phosphatase and/or a lipid phosphatase. Co-chaperone that recruits HSPA8/HSC70 to clathrin-coated vesicles (CCVs) and promotes the ATP-dependent dissociation of clathrin from CCVs and participates in clathrin-mediated endocytosis of synaptic vesicles and their recycling and also in intracellular trafficking. Firstly, binds tightly to the clathrin cages, at a ratio of one DNAJC6 per clathrin triskelion. The HSPA8:ATP complex then binds to the clathrin-auxilin cage, initially at a ratio of one HSPA8 per triskelion leading to ATP hydrolysis stimulation and causing a conformational change in the HSPA8. This cycle is repeated three times to drive to a complex containing the clathrin-auxilin cage associated to three HSPA8:ADP complex. The ATP hydrolysis of the third HSPA8:ATP complex leads to a concerted dismantling of the cage into component triskelia. Then, dissociates from the released triskelia and be recycled to initiate another cycle of HSPA8's recruitment. Also acts during the early steps of clathrin-coated vesicle (CCV) formation through its interaction with the GTP bound form of DNM1. This Bos taurus (Bovine) protein is Auxilin.